The following is a 272-amino-acid chain: NH(3)-dependent NAD(+) synthetase (272 aa).

45-52 contributes to the ATP binding site; sequence GISGGQDS. Position 51 (aspartate 51) interacts with Mg(2+). Position 138 (arginine 138) interacts with deamido-NAD(+). Threonine 158 lines the ATP pocket. Residue glutamate 163 coordinates Mg(2+). Lysine 171 and aspartate 178 together coordinate deamido-NAD(+). 2 residues coordinate ATP: lysine 187 and threonine 209. Deamido-NAD(+) is bound at residue 258-259; it reads HK.

It belongs to the NAD synthetase family. Homodimer.

It carries out the reaction deamido-NAD(+) + NH4(+) + ATP = AMP + diphosphate + NAD(+) + H(+). Its pathway is cofactor biosynthesis; NAD(+) biosynthesis; NAD(+) from deamido-NAD(+) (ammonia route): step 1/1. Its function is as follows. Catalyzes the ATP-dependent amidation of deamido-NAD to form NAD. Uses ammonia as a nitrogen source. This Bacillus cereus (strain ATCC 10987 / NRS 248) protein is NH(3)-dependent NAD(+) synthetase.